Reading from the N-terminus, the 585-residue chain is Parathyroid hormone/parathyroid hormone-related peptide receptor (585 aa).

The signal sequence occupies residues 1–26 (MGAPRISHSLALLLCCSVLSSVYALV). Over 27 to 185 (DADDVITKEE…REREVFDRLG (159 aa)) the chain is Extracellular. Disulfide bonds link cysteine 48-cysteine 114, cysteine 105-cysteine 145, and cysteine 128-cysteine 167. The disordered stretch occupies residues 69–90 (MSRSAKTKKEKPAEKLYSQAEE). 4 N-linked (GlcNAc...) asparagine glycosylation sites follow: asparagine 148, asparagine 158, asparagine 163, and asparagine 173. A helical transmembrane segment spans residues 186-209 (MIYTVGYSISLGSLTVAVLILGYF). Topologically, residues 210 to 216 (RRLHCTR) are cytoplasmic. Residues 217–236 (NYIHMHLFVSFMLRAVSIFI) traverse the membrane as a helical segment. Topologically, residues 237 to 276 (KDAVLYSGVSTDEIERITEEELRAFTEPPPADKAGFVGCR) are extracellular. A helical membrane pass occupies residues 277–300 (VAVTVFLYFLTTNYYWILVEGLYL). Topologically, residues 301 to 314 (HSLIFMAFFSEKKY) are cytoplasmic. The chain crosses the membrane as a helical span at residues 315 to 336 (LWGFTLFGWGLPAVFVAVWVTV). The Extracellular portion of the chain corresponds to 337–355 (RATLANTECWDLSSGNKKW). Residues 356-376 (IIQVPILAAIVVNFILFINII) form a helical membrane-spanning segment. At 377-403 (RVLATKLRETNAGRCDTRQQYRKLLKS) the chain is on the cytoplasmic side. Residues 404–422 (TLVLMPLFGVHYIVFMATP) traverse the membrane as a helical segment. Over 423–434 (YTEVSGILWQVQ) the chain is Extracellular. A helical transmembrane segment spans residues 435–457 (MHYEMLFNSFQGFFVAIIYCFCN). Over 458-585 (GEVQAEIKKS…LLEEERETVM (128 aa)) the chain is Cytoplasmic. Positions 468–471 (WSRW) match the Important for interaction with G proteins motif. The segment at 531-585 (PGYVKHGSISENSLPSSGPEPGTKDDGYLNGSGLYEPMVGEQPPPLLEEERETVM) is disordered.

Belongs to the G-protein coupled receptor 2 family. Homodimer in the absence of bound ligand. Peptide hormone binding leads to dissociation of the homodimer. In terms of processing, N-glycosylated.

It is found in the cell membrane. G-protein-coupled receptor for parathyroid hormone (PTH) and for parathyroid hormone-related peptide (PTHLH). Ligand binding causes a conformation change that triggers signaling via guanine nucleotide-binding proteins (G proteins) and modulates the activity of downstream effectors, such as adenylate cyclase (cAMP). PTH1R is coupled to G(s) G alpha proteins and mediates activation of adenylate cyclase activity. PTHLH dissociates from PTH1R more rapidly than PTH; as consequence, the cAMP response induced by PTHLH decays faster than the response induced by PTH. This Didelphis virginiana (North American opossum) protein is Parathyroid hormone/parathyroid hormone-related peptide receptor (PTH1R).